We begin with the raw amino-acid sequence, 76 residues long: Zinc finger protein 706 (76 aa).

Residues methionine 1 to lysine 13 show a composition bias toward low complexity. Disordered stretches follow at residues methionine 1–alanine 32 and threonine 53–alanine 76. Composition is skewed to basic and acidic residues over residues lysine 17–alanine 31 and threonine 53–histidine 62. A C2H2-type zinc finger spans residues tyrosine 39–histidine 62.

It localises to the cytoplasm. Its subcellular location is the nucleus. In terms of biological role, transcription repressor involved in the exit of embryonic stem cells (ESCs) from self-renewal. This chain is Zinc finger protein 706, found in Gallus gallus (Chicken).